The chain runs to 323 residues: Cyclin-H (323 aa).

The tract at residues 296–323 (GYEDDGYISKKPKTEEDEWTDEDFGDSL) is disordered. Acidic residues predominate over residues 310-323 (EEDEWTDEDFGDSL).

It belongs to the cyclin family. Cyclin C subfamily. In terms of assembly, associates primarily with CDK7 and MAT1 to form the CAK complex. CAK can further associate with the core-TFIIH to form the TFIIH basal transcription factor.

The protein resides in the nucleus. Functionally, regulates CDK7, the catalytic subunit of the CDK-activating kinase (CAK) enzymatic complex. CAK activates the cyclin-associated kinases CDK1, CDK2, CDK4 and CDK6 by threonine phosphorylation. CAK complexed to the core-TFIIH basal transcription factor activates RNA polymerase II by serine phosphorylation of the repetitive C-terminal domain (CTD) of its large subunit (POLR2A), allowing its escape from the promoter and elongation of the transcripts. Involved in cell cycle control and in RNA transcription by RNA polymerase II. Its expression and activity are constant throughout the cell cycle. This chain is Cyclin-H (ccnh), found in Xenopus laevis (African clawed frog).